The primary structure comprises 165 residues: Phosphopantetheine adenylyltransferase (165 aa).

Position 9 (Thr9) interacts with substrate. ATP contacts are provided by residues 9 to 10 (TF) and His17. Residues Lys41, Leu73, and Arg87 each contribute to the substrate site. Residues 88 to 90 (GLR), Glu98, and 123 to 129 (YMFISAT) each bind ATP.

This sequence belongs to the bacterial CoaD family. Homohexamer. Mg(2+) serves as cofactor.

The protein localises to the cytoplasm. The catalysed reaction is (R)-4'-phosphopantetheine + ATP + H(+) = 3'-dephospho-CoA + diphosphate. Its pathway is cofactor biosynthesis; coenzyme A biosynthesis; CoA from (R)-pantothenate: step 4/5. Functionally, reversibly transfers an adenylyl group from ATP to 4'-phosphopantetheine, yielding dephospho-CoA (dPCoA) and pyrophosphate. The protein is Phosphopantetheine adenylyltransferase of Nitrosospira multiformis (strain ATCC 25196 / NCIMB 11849 / C 71).